The chain runs to 190 residues: ADP-ribosylation factor F (190 aa).

Residues 34 to 40 (DGAGKST), 75 to 79 (DIGGQ), and 136 to 139 (NKQD) each bind GTP.

The protein belongs to the small GTPase superfamily. Arf family.

It is found in the golgi apparatus. In terms of biological role, GTP-binding protein that may be involved in protein trafficking. May modulate vesicle budding and uncoating within the Golgi apparatus. This chain is ADP-ribosylation factor F (arrF), found in Dictyostelium discoideum (Social amoeba).